The following is a 917-amino-acid chain: Isoleucine--tRNA ligase (917 aa).

Positions 56, 67, 554, 555, 557, 558, and 585 each coordinate L-isoleucyl-5'-AMP. Positions Pro57–His67 match the 'HIGH' region motif. The short motif at Lys595–Ser599 is the 'KMSKS' region element. Lys598 is an ATP binding site. 2 residues coordinate tRNA(Ile): Arg632 and Gln640. Zn(2+) contacts are provided by Cys886, Cys889, Cys906, and Cys909.

Belongs to the class-I aminoacyl-tRNA synthetase family. IleS type 1 subfamily. In terms of assembly, monomer. Zn(2+) is required as a cofactor.

It localises to the cytoplasm. It carries out the reaction tRNA(Ile) + L-isoleucine + ATP = L-isoleucyl-tRNA(Ile) + AMP + diphosphate. In terms of biological role, catalyzes the attachment of isoleucine to tRNA(Ile). As IleRS can inadvertently accommodate and process structurally similar amino acids such as valine, to avoid such errors it has two additional distinct tRNA(Ile)-dependent editing activities. One activity is designated as 'pretransfer' editing and involves the hydrolysis of activated Val-AMP. The other activity is designated 'posttransfer' editing and involves deacylation of mischarged Val-tRNA(Ile). This is Isoleucine--tRNA ligase (ileS) from Staphylococcus aureus.